An 859-amino-acid chain; its full sequence is Protein O-mannosyl-transferase Tmtc1 (859 aa).

The Cytoplasmic portion of the chain corresponds to 1 to 22 (MHTPKCRRPSMSATLSHKDLAG). Residues 23 to 43 (LAGCSALAFVLYLNTLNAGFV) form a helical membrane-spanning segment. Residues 44–103 (YDDRRAILANGDVTGARPLANLLRNDFWGTPLVDSGSHGSWRPLCVLSFRLNYLAGGMTP) lie on the Extracellular side of the membrane. The helical transmembrane segment at 104 to 124 (LGYHLVNVMLHCVATWLVFLV) threads the bilayer. Residues 125 to 134 (ARTLLPSRMG) are Cytoplasmic-facing. 2 consecutive transmembrane segments (helical) span residues 135 to 154 (VLAA…AVAG) and 155 to 174 (LVGR…YLSY). Topologically, residues 175–189 (RRHMLNREWGSLILT) are cytoplasmic. A helical transmembrane segment spans residues 190–210 (IMLALAALLCKETAITALLLC). Residues 211 to 245 (GLCDVLSPVGRENSDKVCDGSISGLASFNFQRRFR) are Extracellular-facing. A helical transmembrane segment spans residues 246–266 (SLSILGFTLLCGLYCRLSLLP). Residues 267 to 288 (RPSTAFSAADNPTAHESCFWTR) are Cytoplasmic-facing. The chain crosses the membrane as a helical span at residues 289-309 (TLTFLYLPVANFGILLWPQEL). Topologically, residues 310–328 (SFDWGMEAVSRIRTLWDAR) are extracellular. A helical transmembrane segment spans residues 329–349 (NILTAGFYGSLVAILWKGSGL). Over 350–422 (RSAASPMDFA…SWTAAPILGT (73 aa)) the chain is Cytoplasmic. Residues 423–443 (AFLVLPFLPASNLLFYVGFVM) form a helical membrane-spanning segment. Residues 444–446 (AER) lie on the Extracellular side of the membrane. Residues 447–467 (VLYLPSVGYCLLFGLGFGHLW) form a helical membrane-spanning segment. Residues 468–473 (QRVNSS) are Cytoplasmic-facing. The chain crosses the membrane as a helical span at residues 474-493 (WRSRLMLLCGLALLLGVHGV). Over 494-859 (RTFRRNLDWR…RMNVHKHENE (366 aa)) the chain is Extracellular. 9 TPR repeats span residues 518-551 (PKAL…RPTM), 552-585 (ADAH…RPQL), 586-620 (AVAY…EGSG), 632-665 (YTCY…LPLL), 671-704 (AVLH…QPEQ), 705-739 (GAAY…APLE), 740-773 (PSSH…APQD), 774-807 (YTLQ…QPMA), and 808-841 (AHAH…QPGH). Asn567 carries an N-linked (GlcNAc...) asparagine glycan. The N-linked (GlcNAc...) asparagine glycan is linked to Asn718.

The protein belongs to the TMTC family.

It localises to the membrane. The protein localises to the endoplasmic reticulum. The enzyme catalyses a di-trans,poly-cis-dolichyl beta-D-mannosyl phosphate + L-seryl-[protein] = 3-O-(alpha-D-mannosyl)-L-seryl-[protein] + a di-trans,poly-cis-dolichyl phosphate + H(+). The catalysed reaction is a di-trans,poly-cis-dolichyl beta-D-mannosyl phosphate + L-threonyl-[protein] = 3-O-(alpha-D-mannosyl)-L-threonyl-[protein] + a di-trans,poly-cis-dolichyl phosphate + H(+). It participates in protein modification; protein glycosylation. Its function is as follows. Transfers mannosyl residues to the hydroxyl group of serine or threonine residues. In Drosophila melanogaster (Fruit fly), this protein is Protein O-mannosyl-transferase Tmtc1.